The sequence spans 561 residues: SH3 domain-binding protein 2 (561 aa).

The region spanning 26 to 130 (GVAKAGYLHK…WMALLRREIG (105 aa)) is the PH domain. Disordered stretches follow at residues 160 to 316 (VDIS…GACS) and 333 to 451 (KLKS…YEKV). A compositionally biased stretch (acidic residues) spans 170–188 (DNEDYEHDDEDDSYLEPDS). 2 positions are modified to phosphotyrosine; by SYK: tyrosine 174 and tyrosine 183. An SH3-binding motif is present at residues 201–210 (PPAYPPPPVP). 2 stretches are compositionally biased toward pro residues: residues 202 to 213 (PAYPPPPVPTPR) and 233 to 242 (PLLPPPPPKH). Residues 252–266 (EDSKRDPLCPRRAEP) show a composition bias toward basic and acidic residues. Serine 278 is modified (phosphoserine). Residues 342–354 (RGPPTSEPPPVPA) are compositionally biased toward pro residues. 2 positions are modified to phosphoserine: serine 416 and serine 427. Tyrosine 448 bears the Phosphotyrosine; by SYK mark. The 99-residue stretch at 457–555 (VFVNTTESCE…HQSLLLRHPY (99 aa)) folds into the SH2 domain.

Phosphorylated. Phosphorylation at Tyr-448 may stimulate the activity of the LYN kinase. Expressed in a variety of tissues including lung, liver, skeletal muscle, kidney and pancreas.

Binds differentially to the SH3 domains of certain proteins of signal transduction pathways. Binds to phosphatidylinositols; linking the hemopoietic tyrosine kinase fes to the cytoplasmic membrane in a phosphorylation dependent mechanism. The sequence is that of SH3 domain-binding protein 2 (SH3BP2) from Homo sapiens (Human).